A 202-amino-acid chain; its full sequence is ATP-dependent Clp protease proteolytic subunit (202 aa).

Ser-98 (nucleophile) is an active-site residue. Residue His-123 is part of the active site.

This sequence belongs to the peptidase S14 family. Fourteen ClpP subunits assemble into 2 heptameric rings which stack back to back to give a disk-like structure with a central cavity, resembling the structure of eukaryotic proteasomes.

Its subcellular location is the cytoplasm. It catalyses the reaction Hydrolysis of proteins to small peptides in the presence of ATP and magnesium. alpha-casein is the usual test substrate. In the absence of ATP, only oligopeptides shorter than five residues are hydrolyzed (such as succinyl-Leu-Tyr-|-NHMec, and Leu-Tyr-Leu-|-Tyr-Trp, in which cleavage of the -Tyr-|-Leu- and -Tyr-|-Trp bonds also occurs).. Functionally, cleaves peptides in various proteins in a process that requires ATP hydrolysis. Has a chymotrypsin-like activity. Plays a major role in the degradation of misfolded proteins. The polypeptide is ATP-dependent Clp protease proteolytic subunit (Desulfovibrio desulfuricans (strain ATCC 27774 / DSM 6949 / MB)).